A 953-amino-acid polypeptide reads, in one-letter code: Leucine-rich repeat receptor protein kinase HPCA1 (953 aa).

An N-terminal signal peptide occupies residues 1–23; the sequence is MSSRTGASLLLILFFFQICSVSA. At 24 to 558 the chain is on the extracellular side; sequence LTNGLDASAL…EVSSKSSNKS (535 aa). LRR repeat units follow at residues 64–88, 89–113, 115–137, 138–162, 164–187, and 192–216; these read NDRV…ISFL, SELR…IGNL, KLRN…IGTL, KELI…GLLS, LYWF…TSAP, and LLQT…LFSS. An N-linked (GlcNAc...) asparagine glycan is attached at N182. A glycan (N-linked (GlcNAc...) asparagine) is linked at N217. 7 LRR repeats span residues 218-241, 242-265, 266-290, 292-311, 313-337, 339-361, and 362-384; these read MSLI…LSLV, KTLT…LNNL, TNLN…SLTS, YTLD…SWIS, LPSL…FFSP, QLQT…TDVS, and SQLE…ANKV. Residues N264, N284, and N298 are each glycosylated (N-linked (GlcNAc...) asparagine). N-linked (GlcNAc...) asparagine glycosylation is present at N411. 2 disulfides stabilise this stretch: C421/C424 and C434/C436. Residues N456, N459, N510, and N523 are each glycosylated (N-linked (GlcNAc...) asparagine). The chain crosses the membrane as a helical span at residues 559–579; the sequence is ILIGAVVGVVVLLLLLTIAGI. Topologically, residues 580–953 are cytoplasmic; the sequence is YALRQKKRAE…NFPASKLEPQ (374 aa). 2 positions are modified to phosphoserine: S606 and S607. A Protein kinase domain is found at 631–905; the sequence is FSEANDVGGG…EVVKEIENIM (275 aa). ATP-binding positions include 637-645 and K659; that span reads VGGGGYGKV. D755 functions as the Proton acceptor in the catalytic mechanism. T786, T789, and T790 each carry phosphothreonine. The segment covering 912–921 has biased composition (polar residues); the sequence is PNSDSATSSR. The interval 912 to 953 is disordered; the sequence is PNSDSATSSRTYEDAIKGSGDPYGSESFQYSGNFPASKLEPQ. S942 carries the phosphoserine modification.

This sequence belongs to the protein kinase superfamily. Ser/Thr protein kinase family. Post-translationally, autophosphorylated at Ser-606, Ser-607, Thr-786, Thr-789, Thr-790 and Ser-942 in response to extracellular hydrogen peroxide. As to expression, widely expressed.

Its subcellular location is the cell membrane. The catalysed reaction is L-seryl-[protein] + ATP = O-phospho-L-seryl-[protein] + ADP + H(+). It catalyses the reaction L-threonyl-[protein] + ATP = O-phospho-L-threonyl-[protein] + ADP + H(+). Its activity is regulated as follows. Activated by autophosphorylation on serine and threonine residues in response to extracellular hydrogen peroxide. Its function is as follows. Leucine-rich repeat receptor protein kinase that acts as sensor of extracellular hydrogen peroxide. Required for intracellular calcium influx in response to extracellular hydrogen peroxide. Mediates hydrogen peroxide-induced activation of calcium channels in guard cells and is required for stomatal closure. This Arabidopsis thaliana (Mouse-ear cress) protein is Leucine-rich repeat receptor protein kinase HPCA1.